A 255-amino-acid polypeptide reads, in one-letter code: 5-oxoprolinase subunit A (255 aa).

The protein belongs to the LamB/PxpA family. In terms of assembly, forms a complex composed of PxpA, PxpB and PxpC.

The catalysed reaction is 5-oxo-L-proline + ATP + 2 H2O = L-glutamate + ADP + phosphate + H(+). Catalyzes the cleavage of 5-oxoproline to form L-glutamate coupled to the hydrolysis of ATP to ADP and inorganic phosphate. The protein is 5-oxoprolinase subunit A of Campylobacter jejuni subsp. jejuni serotype O:2 (strain ATCC 700819 / NCTC 11168).